A 162-amino-acid polypeptide reads, in one-letter code: MKKISSVFTMFALIAAILFSGFIPQQAYAETTLTPTATNKTASIQLTSDVHTLAVINTFDGVADYLIRYKRLPDNYITKSQASALGWVASKGNLAEVAPGKSIGGDVFSNREGRLPSASGRTWREADINYVSGFRNADRLVYSSDWLIYKTTDHYATFTRIR.

An N-terminal signal peptide occupies residues 1–29 (MKKISSVFTMFALIAAILFSGFIPQQAYA). The propeptide occupies 30 to 53 (ETTLTPTATNKTASIQLTSDVHTL). The active-site Proton acceptor is E125. H154 functions as the Proton donor in the catalytic mechanism.

The protein belongs to the ribonuclease N1/T1 family.

The protein localises to the secreted. This is a purine-specific ribonuclease. This chain is Ribonuclease, found in Bacillus pumilus (Bacillus mesentericus).